The chain runs to 356 residues: DNA-directed RNA polymerase subunit alpha (356 aa).

Positions 1–230 (MNLHRISSEP…DLLKPLLKVE (230 aa)) are alpha N-terminal domain (alpha-NTD). The interval 267–356 (IDQPLLPADS…IRKSYGHILG (90 aa)) is alpha C-terminal domain (alpha-CTD).

It belongs to the RNA polymerase alpha chain family. In terms of assembly, in plastids the minimal PEP RNA polymerase catalytic core is composed of four subunits: alpha, beta, beta', and beta''. When a (nuclear-encoded) sigma factor is associated with the core the holoenzyme is formed, which can initiate transcription.

Its subcellular location is the plastid. The protein localises to the chloroplast. The enzyme catalyses RNA(n) + a ribonucleoside 5'-triphosphate = RNA(n+1) + diphosphate. In terms of biological role, DNA-dependent RNA polymerase catalyzes the transcription of DNA into RNA using the four ribonucleoside triphosphates as substrates. This Zygnema circumcarinatum (Green alga) protein is DNA-directed RNA polymerase subunit alpha.